An 86-amino-acid polypeptide reads, in one-letter code: Large ribosomal subunit protein eL20 (86 aa).

The protein belongs to the eukaryotic ribosomal protein eL20 family. Part of the 50S ribosomal subunit. Binds 23S rRNA.

The protein is Large ribosomal subunit protein eL20 of Saccharolobus solfataricus (strain ATCC 35092 / DSM 1617 / JCM 11322 / P2) (Sulfolobus solfataricus).